Consider the following 310-residue polypeptide: Homoserine O-acetyltransferase (310 aa).

C142 functions as the Acyl-thioester intermediate in the catalytic mechanism. Substrate contacts are provided by K163 and S192. The Proton acceptor role is filled by H235. Residue E237 is part of the active site. Residue R249 participates in substrate binding.

Belongs to the MetA family.

The protein localises to the cytoplasm. The enzyme catalyses L-homoserine + acetyl-CoA = O-acetyl-L-homoserine + CoA. Its pathway is amino-acid biosynthesis; L-methionine biosynthesis via de novo pathway; O-acetyl-L-homoserine from L-homoserine: step 1/1. In terms of biological role, transfers an acetyl group from acetyl-CoA to L-homoserine, forming acetyl-L-homoserine. This chain is Homoserine O-acetyltransferase, found in Agathobacter rectalis (strain ATCC 33656 / DSM 3377 / JCM 17463 / KCTC 5835 / VPI 0990) (Eubacterium rectale).